Here is a 335-residue protein sequence, read N- to C-terminus: Selenide, water dikinase (335 aa).

Residue Sec7 is part of the active site. A non-standard amino acid (selenocysteine) is located at residue Sec7. ATP contacts are provided by residues Lys10 and 36-38; that span reads LGD. A Mg(2+)-binding site is contributed by Asp39. ATP contacts are provided by residues Asp55, Asp78, and 126–128; that span reads GHT. Residue Asp78 participates in Mg(2+) binding. Asp232 is a Mg(2+) binding site.

It belongs to the selenophosphate synthase 1 family. Class I subfamily. Homodimer. It depends on Mg(2+) as a cofactor.

The catalysed reaction is hydrogenselenide + ATP + H2O = selenophosphate + AMP + phosphate + 2 H(+). Functionally, synthesizes selenophosphate from selenide and ATP. The polypeptide is Selenide, water dikinase (Methanococcus maripaludis (strain DSM 14266 / JCM 13030 / NBRC 101832 / S2 / LL)).